Reading from the N-terminus, the 92-residue chain is Co-chaperonin GroES (92 aa).

Belongs to the GroES chaperonin family. As to quaternary structure, heptamer of 7 subunits arranged in a ring. Interacts with the chaperonin GroEL.

Its subcellular location is the cytoplasm. Functionally, together with the chaperonin GroEL, plays an essential role in assisting protein folding. The GroEL-GroES system forms a nano-cage that allows encapsulation of the non-native substrate proteins and provides a physical environment optimized to promote and accelerate protein folding. GroES binds to the apical surface of the GroEL ring, thereby capping the opening of the GroEL channel. The polypeptide is Co-chaperonin GroES (Thermotoga petrophila (strain ATCC BAA-488 / DSM 13995 / JCM 10881 / RKU-1)).